Consider the following 380-residue polypeptide: Queuine tRNA-ribosyltransferase (380 aa).

The Proton acceptor role is filled by aspartate 95. Residues 95-99 (DSGGF), aspartate 149, glutamine 192, and glycine 219 contribute to the substrate site. Residues 250–256 (GVGSPDA) form an RNA binding region. The active-site Nucleophile is aspartate 269. The tract at residues 274 to 278 (TRIAR) is RNA binding; important for wobble base 34 recognition. Residues cysteine 307, cysteine 309, cysteine 312, and histidine 338 each coordinate Zn(2+).

The protein belongs to the queuine tRNA-ribosyltransferase family. In terms of assembly, homodimer. Within each dimer, one monomer is responsible for RNA recognition and catalysis, while the other monomer binds to the replacement base PreQ1. Zn(2+) is required as a cofactor.

The catalysed reaction is 7-aminomethyl-7-carbaguanine + guanosine(34) in tRNA = 7-aminomethyl-7-carbaguanosine(34) in tRNA + guanine. The protein operates within tRNA modification; tRNA-queuosine biosynthesis. Functionally, catalyzes the base-exchange of a guanine (G) residue with the queuine precursor 7-aminomethyl-7-deazaguanine (PreQ1) at position 34 (anticodon wobble position) in tRNAs with GU(N) anticodons (tRNA-Asp, -Asn, -His and -Tyr). Catalysis occurs through a double-displacement mechanism. The nucleophile active site attacks the C1' of nucleotide 34 to detach the guanine base from the RNA, forming a covalent enzyme-RNA intermediate. The proton acceptor active site deprotonates the incoming PreQ1, allowing a nucleophilic attack on the C1' of the ribose to form the product. After dissociation, two additional enzymatic reactions on the tRNA convert PreQ1 to queuine (Q), resulting in the hypermodified nucleoside queuosine (7-(((4,5-cis-dihydroxy-2-cyclopenten-1-yl)amino)methyl)-7-deazaguanosine). This chain is Queuine tRNA-ribosyltransferase, found in Pediococcus pentosaceus (strain ATCC 25745 / CCUG 21536 / LMG 10740 / 183-1w).